A 108-amino-acid chain; its full sequence is Small ribosomal subunit protein eS25w (108 aa).

The tract at residues 1 to 36 (MAPKKDKVPPPSSKPAKSGGGKQKKKKWSKGKQKEK) is disordered. Basic residues predominate over residues 22-31 (KQKKKKWSKG).

Belongs to the eukaryotic ribosomal protein eS25 family.

This chain is Small ribosomal subunit protein eS25w (RPS25E), found in Arabidopsis thaliana (Mouse-ear cress).